The primary structure comprises 232 residues: 5'-methylthioadenosine/S-adenosylhomocysteine nucleosidase (232 aa).

Glutamate 12 serves as the catalytic Proton acceptor. Substrate is bound by residues glycine 78, isoleucine 152, and 173–174 (ME). Aspartate 197 serves as the catalytic Proton donor.

Belongs to the PNP/UDP phosphorylase family. MtnN subfamily. Homodimer.

The catalysed reaction is S-adenosyl-L-homocysteine + H2O = S-(5-deoxy-D-ribos-5-yl)-L-homocysteine + adenine. It catalyses the reaction S-methyl-5'-thioadenosine + H2O = 5-(methylsulfanyl)-D-ribose + adenine. The enzyme catalyses 5'-deoxyadenosine + H2O = 5-deoxy-D-ribose + adenine. It participates in amino-acid biosynthesis; L-methionine biosynthesis via salvage pathway; S-methyl-5-thio-alpha-D-ribose 1-phosphate from S-methyl-5'-thioadenosine (hydrolase route): step 1/2. In terms of biological role, catalyzes the irreversible cleavage of the glycosidic bond in both 5'-methylthioadenosine (MTA) and S-adenosylhomocysteine (SAH/AdoHcy) to adenine and the corresponding thioribose, 5'-methylthioribose and S-ribosylhomocysteine, respectively. Also cleaves 5'-deoxyadenosine, a toxic by-product of radical S-adenosylmethionine (SAM) enzymes, into 5-deoxyribose and adenine. Thus, is required for in vivo function of the radical SAM enzymes biotin synthase and lipoic acid synthase, that are inhibited by 5'-deoxyadenosine accumulation. The protein is 5'-methylthioadenosine/S-adenosylhomocysteine nucleosidase of Salmonella paratyphi B (strain ATCC BAA-1250 / SPB7).